Reading from the N-terminus, the 121-residue chain is Large ribosomal subunit protein uL14 (121 aa).

It belongs to the universal ribosomal protein uL14 family. Part of the 50S ribosomal subunit. Forms a cluster with proteins L3 and L19. In the 70S ribosome, L14 and L19 interact and together make contacts with the 16S rRNA in bridges B5 and B8.

In terms of biological role, binds to 23S rRNA. Forms part of two intersubunit bridges in the 70S ribosome. This chain is Large ribosomal subunit protein uL14, found in Prochlorococcus marinus (strain MIT 9211).